Reading from the N-terminus, the 387-residue chain is F-box protein At5g41490 (387 aa).

The region spanning 2-47 (ATMITNLRRDLIEEIISRVPLRSMKAVRLTCKSWNNISKSEIFTKM) is the F-box domain.

This chain is F-box protein At5g41490, found in Arabidopsis thaliana (Mouse-ear cress).